A 159-amino-acid polypeptide reads, in one-letter code: MFVLNFELAGVNKNDIKIEIKDSLLCIQGEKYKSMNNNNKNNLQINNDDKPMIEEEDDDSSSSSNNNNNNNNNNNNNNNNNNNNNNNNNSNNNNNKSSKTNDKKFISERSFGHFEKYLDLSPVFYQLDLSTINAQFEDGLLTITVRKTNLSNNIKIQIN.

One can recognise a sHSP domain in the interval 1 to 159; sequence MFVLNFELAG…LSNNIKIQIN (159 aa). The tract at residues 35–101 is disordered; the sequence is MNNNNKNNLQ…NNNNKSSKTN (67 aa). Composition is skewed to low complexity over residues 36 to 46 and 61 to 95; these read NNNNKNNLQIN and SSSSNNNNNNNNNNNNNNNNNNNNNNNNNSNNNNN.

It belongs to the small heat shock protein (HSP20) family.

This chain is Small heat shock protein hspM (hspM), found in Dictyostelium discoideum (Social amoeba).